Reading from the N-terminus, the 251-residue chain is 4-hydroxy-tetrahydrodipicolinate reductase (251 aa).

NAD(+) contacts are provided by residues 8–13, 76–78, and 106–109; these read GAKGRM, GTT, and APNF. The active-site Proton donor/acceptor is histidine 136. Histidine 137 is a (S)-2,3,4,5-tetrahydrodipicolinate binding site. The active-site Proton donor is lysine 140. A (S)-2,3,4,5-tetrahydrodipicolinate-binding site is contributed by 146–147; sequence GT.

This sequence belongs to the DapB family.

The protein localises to the cytoplasm. It carries out the reaction (S)-2,3,4,5-tetrahydrodipicolinate + NAD(+) + H2O = (2S,4S)-4-hydroxy-2,3,4,5-tetrahydrodipicolinate + NADH + H(+). It catalyses the reaction (S)-2,3,4,5-tetrahydrodipicolinate + NADP(+) + H2O = (2S,4S)-4-hydroxy-2,3,4,5-tetrahydrodipicolinate + NADPH + H(+). The protein operates within amino-acid biosynthesis; L-lysine biosynthesis via DAP pathway; (S)-tetrahydrodipicolinate from L-aspartate: step 4/4. In terms of biological role, catalyzes the conversion of 4-hydroxy-tetrahydrodipicolinate (HTPA) to tetrahydrodipicolinate. The sequence is that of 4-hydroxy-tetrahydrodipicolinate reductase from Bifidobacterium longum (strain NCC 2705).